The sequence spans 316 residues: Pre-rRNA-processing protein ESF2 (316 aa).

Residues methionine 1–aspartate 91 are disordered. Phosphoserine is present on residues serine 7, serine 13, and serine 14. The segment covering aspartate 8 to threonine 18 has biased composition (acidic residues). The segment covering serine 32 to aspartate 44 has biased composition (basic and acidic residues). Acidic residues predominate over residues isoleucine 45–lysine 58. The segment covering glutamine 59–arginine 78 has biased composition (basic and acidic residues). Positions glycine 114–isoleucine 204 constitute an RRM domain. The segment at lysine 261 to leucine 316 is disordered. Positions glycine 268–threonine 289 are enriched in basic and acidic residues. Residues serine 290–leucine 316 show a composition bias toward polar residues.

Belongs to the ESF2/ABP1 family. As to quaternary structure, component of the 90S pre-ribosomes. Interacts directly with DBP8.

It is found in the nucleus. It localises to the nucleolus. Involved in the small subunit (SSU) processome assembly and function, and in the 18S rRNA synthesis. Required for the early cleavages at sites A0, A1 and A2. Stimulates DBP8 RNA helicase ATPase activity. In Saccharomyces cerevisiae (strain ATCC 204508 / S288c) (Baker's yeast), this protein is Pre-rRNA-processing protein ESF2 (ESF2).